A 245-amino-acid polypeptide reads, in one-letter code: 3-deoxy-manno-octulosonate cytidylyltransferase (245 aa).

Belongs to the KdsB family.

Its subcellular location is the cytoplasm. The catalysed reaction is 3-deoxy-alpha-D-manno-oct-2-ulosonate + CTP = CMP-3-deoxy-beta-D-manno-octulosonate + diphosphate. The protein operates within nucleotide-sugar biosynthesis; CMP-3-deoxy-D-manno-octulosonate biosynthesis; CMP-3-deoxy-D-manno-octulosonate from 3-deoxy-D-manno-octulosonate and CTP: step 1/1. Its pathway is bacterial outer membrane biogenesis; lipopolysaccharide biosynthesis. Its function is as follows. Activates KDO (a required 8-carbon sugar) for incorporation into bacterial lipopolysaccharide in Gram-negative bacteria. The polypeptide is 3-deoxy-manno-octulosonate cytidylyltransferase (Rhodopseudomonas palustris (strain ATCC BAA-98 / CGA009)).